A 604-amino-acid polypeptide reads, in one-letter code: Aspartate--tRNA(Asp/Asn) ligase (604 aa).

Glutamate 177 contacts L-aspartate. The aspartate stretch occupies residues 201–204; sequence QLFK. Arginine 223 lines the L-aspartate pocket. Residues 223–225 and glutamine 232 contribute to the ATP site; that span reads RDE. Histidine 457 is a binding site for L-aspartate. Glutamate 495 provides a ligand contact to ATP. Arginine 502 contributes to the L-aspartate binding site. 547–550 contacts ATP; that stretch reads GLDR.

This sequence belongs to the class-II aminoacyl-tRNA synthetase family. Type 1 subfamily. As to quaternary structure, homodimer.

It localises to the cytoplasm. The enzyme catalyses tRNA(Asx) + L-aspartate + ATP = L-aspartyl-tRNA(Asx) + AMP + diphosphate. In terms of biological role, aspartyl-tRNA synthetase with relaxed tRNA specificity since it is able to aspartylate not only its cognate tRNA(Asp) but also tRNA(Asn). Reaction proceeds in two steps: L-aspartate is first activated by ATP to form Asp-AMP and then transferred to the acceptor end of tRNA(Asp/Asn). The polypeptide is Aspartate--tRNA(Asp/Asn) ligase (Synechococcus sp. (strain RCC307)).